The sequence spans 699 residues: Elongation factor G 2 (699 aa).

The tr-type G domain occupies 8 to 290; sequence ERYRNIGICA…AVIEYLPSPT (283 aa). Residues 17–24, 88–92, and 142–145 each bind GTP; these read AHVDAGKT, DTPGH, and NKMD.

It belongs to the TRAFAC class translation factor GTPase superfamily. Classic translation factor GTPase family. EF-G/EF-2 subfamily.

The protein localises to the cytoplasm. Catalyzes the GTP-dependent ribosomal translocation step during translation elongation. During this step, the ribosome changes from the pre-translocational (PRE) to the post-translocational (POST) state as the newly formed A-site-bound peptidyl-tRNA and P-site-bound deacylated tRNA move to the P and E sites, respectively. Catalyzes the coordinated movement of the two tRNA molecules, the mRNA and conformational changes in the ribosome. The sequence is that of Elongation factor G 2 from Colwellia psychrerythraea (strain 34H / ATCC BAA-681) (Vibrio psychroerythus).